A 142-amino-acid chain; its full sequence is MAARMTIMLPLAVALICLLQTEPGMAAHSHIRKVLQLFRSIELDDSKKSFYLTAAKYGIQTQLREPLVRFAGGFAPSTRLSEACVKNAIARIYEIEGEFYAKFSYACENHDPYSVECLEEAQDDYPTKLGELFKKTKKCLRE.

Positions 1-26 (MAARMTIMLPLAVALICLLQTEPGMA) are cleaved as a signal peptide. 2 disulfides stabilise this stretch: Cys84–Cys139 and Cys107–Cys117.

It localises to the secreted. Its function is as follows. Salivary protein that moderately inhibits the alternative pathway for complement system activation in the host. This chain is gSG7 salivary protein, found in Anopheles darlingi (Mosquito).